A 390-amino-acid polypeptide reads, in one-letter code: Pyruvate dehydrogenase E1 component subunit alpha, somatic form, mitochondrial (390 aa).

The N-terminal 29 residues, 1–29 (MRKMLAAVSRVLAGAAQKPASRVLVASRN), are a transit peptide targeting the mitochondrion. Lysine 63 is modified (N6-acetyllysine; alternate). An N6-succinyllysine; alternate modification is found at lysine 63. Positions 92, 118, 119, 157, 165, 167, 196, 197, 198, 225, and 227 each coordinate pyruvate. Thiamine diphosphate contacts are provided by tyrosine 118 and arginine 119. Positions 165, 167, 196, 197, 198, and 225 each coordinate thiamine diphosphate. Mg(2+) is bound at residue aspartate 196. 2 residues coordinate Mg(2+): asparagine 225 and tyrosine 227. The residue at position 232 (serine 232) is a Phosphoserine; by PDK1. N6-acetyllysine; alternate is present on lysine 244. Lysine 244 is modified (N6-succinyllysine; alternate). Lysine 267 carries the post-translational modification N6-acetyllysine. Lysine 277 carries the post-translational modification N6-succinyllysine. Histidine 292 is a binding site for thiamine diphosphate. Serine 293 is subject to Phosphoserine; by PDK1, PDK2, PDK3 and PDK4. Serine 295 carries the post-translational modification Phosphoserine. Serine 300 is modified (phosphoserine; by PDK1, PDK2, PDK3 and PDK4). At tyrosine 301 the chain carries Phosphotyrosine. Lysine 313 is subject to N6-acetyllysine; alternate. Lysine 313 carries the N6-succinyllysine; alternate modification. 2 positions are modified to N6-acetyllysine: lysine 321 and lysine 336. Lysine 385 carries the post-translational modification N6-succinyllysine.

In terms of assembly, heterotetramer of two PDHA1 and two PDHB subunits. The heterotetramer interacts with DLAT, and is part of the multimeric pyruvate dehydrogenase complex that contains multiple copies of pyruvate dehydrogenase (E1), dihydrolipoamide acetyltransferase (DLAT, E2) and lipoamide dehydrogenase (DLD, E3). These subunits are bound to an inner core composed of about 48 DLAT and 12 PDHX molecules. Thiamine diphosphate is required as a cofactor. The cofactor is Mg(2+). Phosphorylation at Ser-232, Ser-293 and Ser-300 by PDK family kinases inactivates the enzyme; for this phosphorylation at a single site is sufficient. Phosphorylation at Ser-293 interferes with access to active site, and thereby inactivates the enzyme. Dephosphorylation at all three sites, i.e. at Ser-232, Ser-293 and Ser-300, is required for reactivation. Post-translationally, acetylation alters the phosphorylation pattern. Deacetylated by SIRT3. In terms of tissue distribution, in all tissues, but in very low amount in testis.

Its subcellular location is the mitochondrion matrix. The catalysed reaction is N(6)-[(R)-lipoyl]-L-lysyl-[protein] + pyruvate + H(+) = N(6)-[(R)-S(8)-acetyldihydrolipoyl]-L-lysyl-[protein] + CO2. Its activity is regulated as follows. Pyruvate dehydrogenase activity is inhibited by phosphorylation of PDHA1; it is reactivated by dephosphorylation. The pyruvate dehydrogenase complex catalyzes the overall conversion of pyruvate to acetyl-CoA and CO(2), and thereby links the glycolytic pathway to the tricarboxylic cycle. The sequence is that of Pyruvate dehydrogenase E1 component subunit alpha, somatic form, mitochondrial (Pdha1) from Rattus norvegicus (Rat).